We begin with the raw amino-acid sequence, 330 residues long: tRNA U34 carboxymethyltransferase (330 aa).

Carboxy-S-adenosyl-L-methionine contacts are provided by residues Lys91, Trp105, Lys110, Gly130, 152 to 154 (DPS), 181 to 182 (IE), Met196, Tyr200, and Arg315.

This sequence belongs to the class I-like SAM-binding methyltransferase superfamily. CmoB family. Homotetramer.

The enzyme catalyses carboxy-S-adenosyl-L-methionine + 5-hydroxyuridine(34) in tRNA = 5-carboxymethoxyuridine(34) in tRNA + S-adenosyl-L-homocysteine + H(+). Functionally, catalyzes carboxymethyl transfer from carboxy-S-adenosyl-L-methionine (Cx-SAM) to 5-hydroxyuridine (ho5U) to form 5-carboxymethoxyuridine (cmo5U) at position 34 in tRNAs. The polypeptide is tRNA U34 carboxymethyltransferase (Shewanella loihica (strain ATCC BAA-1088 / PV-4)).